Here is a 352-residue protein sequence, read N- to C-terminus: Homeobox protein Mohawk (352 aa).

The tract at residues 19–53 (GASERERGGRPYSGVLDSPHARPEVGIADGPPLKD) is disordered. The segment at residues 71-132 (VRHKRQALQD…NARRRLKNTV (62 aa)) is a DNA-binding region (homeobox; TALE-type). Disordered stretches follow at residues 157–194 (LSVS…IKSE) and 245–272 (TRQR…SETE).

It belongs to the TALE/IRO homeobox family.

The protein localises to the nucleus. Its function is as follows. May act as a morphogenetic regulator of cell adhesion. The chain is Homeobox protein Mohawk (MKX) from Pongo abelii (Sumatran orangutan).